The chain runs to 392 residues: Stilbene synthase 1 (392 aa).

Substrate is bound at residue 55 to 58 (KFNR). The active site involves Cys164. Residues Leu267 and 305-307 (GGP) contribute to the substrate site.

This sequence belongs to the thiolase-like superfamily. Chalcone/stilbene synthases family. Homodimer. In leaves, expressed in palisade and spongy parenchyma cells and, to a lesser extent, in epidermal cells after induction.

The protein localises to the cytoplasm. The enzyme catalyses 4-coumaroyl-CoA + 3 malonyl-CoA + 3 H(+) = trans-resveratrol + 4 CO2 + 4 CoA. Its pathway is phytoalexin biosynthesis; 3,4',5-trihydroxystilbene biosynthesis; 3,4',5-trihydroxystilbene from trans-4-coumarate: step 2/2. Its function is as follows. Mediates resistance to pathogens which are sensitive to stilbenes such as Botrytis cinerea, Eutypa lata and Plasmopora viticola by enhancing the production of phytoalexins. Confers resistance to Phytophthora palmivora when expressed in papaya. This Vitis vinifera (Grape) protein is Stilbene synthase 1 (VINST1).